We begin with the raw amino-acid sequence, 205 residues long: FMN-dependent NADH:quinone oxidoreductase (205 aa).

FMN contacts are provided by residues Ser-10 and 16–18; that span reads SVS.

This sequence belongs to the azoreductase type 1 family. In terms of assembly, homodimer. FMN is required as a cofactor.

The catalysed reaction is 2 a quinone + NADH + H(+) = 2 a 1,4-benzosemiquinone + NAD(+). It catalyses the reaction N,N-dimethyl-1,4-phenylenediamine + anthranilate + 2 NAD(+) = 2-(4-dimethylaminophenyl)diazenylbenzoate + 2 NADH + 2 H(+). Its function is as follows. Quinone reductase that provides resistance to thiol-specific stress caused by electrophilic quinones. In terms of biological role, also exhibits azoreductase activity. Catalyzes the reductive cleavage of the azo bond in aromatic azo compounds to the corresponding amines. This Agrobacterium fabrum (strain C58 / ATCC 33970) (Agrobacterium tumefaciens (strain C58)) protein is FMN-dependent NADH:quinone oxidoreductase.